Consider the following 374-residue polypeptide: Putative heme chaperone HemW-like protein (374 aa).

Residues 1-231 enclose the Radical SAM core domain; sequence MKLLGLYINI…EKLLKKSGYK (231 aa).

The protein belongs to the anaerobic coproporphyrinogen-III oxidase family. HemW subfamily.

The protein localises to the cytoplasm. Might be a heme chaperone; in E.coli heme binds independently of binding to [4Fe-4S] or S-adenosyl-L-methionine. The chain is Putative heme chaperone HemW-like protein from Buchnera aphidicola subsp. Baizongia pistaciae (strain Bp).